The primary structure comprises 125 residues: Calcitonin receptor-stimulating peptide 2 (125 aa).

The first 25 residues, 1–25 (MGFWKFLPFLVLSFLVVYQAGMFQA), serve as a signal peptide directing secretion. The propeptide occupies 26–77 (APFRSALENDFDPAILTEKEMCLLLAAVMNDYVQMKTSELKQEAEHFHITAQ). The cysteines at positions 81 and 86 are disulfide-linked.

The protein belongs to the calcitonin family.

It is found in the secreted. In Capra hircus (Goat), this protein is Calcitonin receptor-stimulating peptide 2 (CRSP2).